We begin with the raw amino-acid sequence, 599 residues long: Elongation factor 4 (599 aa).

The region spanning Lys4–Leu186 is the tr-type G domain. Residues Asp16–Thr21 and Asn133–Asp136 contribute to the GTP site.

It belongs to the TRAFAC class translation factor GTPase superfamily. Classic translation factor GTPase family. LepA subfamily.

The protein resides in the cell membrane. It carries out the reaction GTP + H2O = GDP + phosphate + H(+). Functionally, required for accurate and efficient protein synthesis under certain stress conditions. May act as a fidelity factor of the translation reaction, by catalyzing a one-codon backward translocation of tRNAs on improperly translocated ribosomes. Back-translocation proceeds from a post-translocation (POST) complex to a pre-translocation (PRE) complex, thus giving elongation factor G a second chance to translocate the tRNAs correctly. Binds to ribosomes in a GTP-dependent manner. The protein is Elongation factor 4 of Ureaplasma parvum serovar 3 (strain ATCC 27815 / 27 / NCTC 11736).